Consider the following 184-residue polypeptide: Large ribosomal subunit protein uL22 (184 aa).

A disordered region spans residues 160–184; sequence PEEEVAQKKKISQKKLKKQKLMARE. Positions 167–184 are enriched in basic residues; that stretch reads KKKISQKKLKKQKLMARE.

The protein belongs to the universal ribosomal protein uL22 family. In terms of assembly, component of the large ribosomal subunit.

It is found in the cytoplasm. Its function is as follows. Component of the large ribosomal subunit. The ribosome is a large ribonucleoprotein complex responsible for the synthesis of proteins in the cell. This is Large ribosomal subunit protein uL22 (RPL17) from Bos taurus (Bovine).